Consider the following 27-residue polypeptide: NADH-ubiquinone oxidoreductase chain 1 (27 aa).

The helical transmembrane segment at 3–23 (LIFPLVGSLLLVICVMVGVAF) threads the bilayer.

It belongs to the complex I subunit 1 family.

It localises to the mitochondrion inner membrane. It carries out the reaction a ubiquinone + NADH + 5 H(+)(in) = a ubiquinol + NAD(+) + 4 H(+)(out). Its function is as follows. Core subunit of the mitochondrial membrane respiratory chain NADH dehydrogenase (Complex I) that is believed to belong to the minimal assembly required for catalysis. Complex I functions in the transfer of electrons from NADH to the respiratory chain. The immediate electron acceptor for the enzyme is believed to be ubiquinone. This Simulium vittatum (Striped black fly) protein is NADH-ubiquinone oxidoreductase chain 1 (ND1).